A 60-amino-acid chain; its full sequence is Large ribosomal subunit protein uL30 (60 aa).

Belongs to the universal ribosomal protein uL30 family. In terms of assembly, part of the 50S ribosomal subunit.

This Limosilactobacillus fermentum (strain NBRC 3956 / LMG 18251) (Lactobacillus fermentum) protein is Large ribosomal subunit protein uL30.